Consider the following 102-residue polypeptide: Ferredoxin, 2Fe-2S (102 aa).

[2Fe-2S] cluster-binding residues include Cys11, Cys24, Cys56, and Cys60.

It belongs to the 2Fe2S Shethna-type ferredoxin family. Requires [2Fe-2S] cluster as cofactor.

Ferredoxins are iron-sulfur proteins that transfer electrons in a wide variety of metabolic reactions. This is Ferredoxin, 2Fe-2S from Clostridium pasteurianum.